The sequence spans 107 residues: U1-lycotoxin-Ls1g (107 aa).

An N-terminal signal peptide occupies residues 1-20; that stretch reads MMKVLVVVALLVTLISYSSS. Positions 21 to 41 are excised as a propeptide; that stretch reads EGIDDLEADELLSLMANEQTR. 3 cysteine pairs are disulfide-bonded: C51–C68, C58–C86, and C70–C84.

Belongs to the neurotoxin 19 (CSTX) family. 04 (U1-Lctx) subfamily. In terms of tissue distribution, expressed by the venom gland.

The protein localises to the secreted. This chain is U1-lycotoxin-Ls1g, found in Lycosa singoriensis (Wolf spider).